The chain runs to 82 residues: RNA-binding protein Hfq (82 aa).

Residues 11 to 71 (DTFLNHVRKT…ISTIMPGAPI (61 aa)) enclose the Sm domain.

This sequence belongs to the Hfq family. As to quaternary structure, homohexamer.

Functionally, RNA chaperone that binds small regulatory RNA (sRNAs) and mRNAs to facilitate mRNA translational regulation in response to envelope stress, environmental stress and changes in metabolite concentrations. Also binds with high specificity to tRNAs. The protein is RNA-binding protein Hfq of Nitrobacter winogradskyi (strain ATCC 25391 / DSM 10237 / CIP 104748 / NCIMB 11846 / Nb-255).